The sequence spans 266 residues: Thymidylate synthase (266 aa).

Arginine 24 provides a ligand contact to dUMP. Histidine 54 contributes to the (6R)-5,10-methylene-5,6,7,8-tetrahydrofolate binding site. Arginine 129–arginine 130 contacts dUMP. Cysteine 149 serves as the catalytic Nucleophile. Residues arginine 169–aspartate 172, asparagine 180, and histidine 210–tyrosine 212 contribute to the dUMP site. A (6R)-5,10-methylene-5,6,7,8-tetrahydrofolate-binding site is contributed by aspartate 172. Alanine 265 is a binding site for (6R)-5,10-methylene-5,6,7,8-tetrahydrofolate.

Belongs to the thymidylate synthase family. Bacterial-type ThyA subfamily. In terms of assembly, homodimer.

Its subcellular location is the cytoplasm. The enzyme catalyses dUMP + (6R)-5,10-methylene-5,6,7,8-tetrahydrofolate = 7,8-dihydrofolate + dTMP. The protein operates within pyrimidine metabolism; dTTP biosynthesis. Catalyzes the reductive methylation of 2'-deoxyuridine-5'-monophosphate (dUMP) to 2'-deoxythymidine-5'-monophosphate (dTMP) while utilizing 5,10-methylenetetrahydrofolate (mTHF) as the methyl donor and reductant in the reaction, yielding dihydrofolate (DHF) as a by-product. This enzymatic reaction provides an intracellular de novo source of dTMP, an essential precursor for DNA biosynthesis. The polypeptide is Thymidylate synthase (Mycolicibacterium paratuberculosis (strain ATCC BAA-968 / K-10) (Mycobacterium paratuberculosis)).